Here is a 213-residue protein sequence, read N- to C-terminus: Large ribosomal subunit protein uL1 (213 aa).

This sequence belongs to the universal ribosomal protein uL1 family. Part of the 50S ribosomal subunit.

Functionally, binds directly to 23S rRNA. Probably involved in E site tRNA release. In terms of biological role, protein L1 is also a translational repressor protein, it controls the translation of its operon by binding to its mRNA. In Nanoarchaeum equitans (strain Kin4-M), this protein is Large ribosomal subunit protein uL1.